The sequence spans 87 residues: Candoxin (87 aa).

Positions 1 to 21 (MKTLLLTLVVVTIVCLDLGYT) are cleaved as a signal peptide. 5 disulfides stabilise this stretch: Cys24-Cys47, Cys27-Cys32, Cys40-Cys64, Cys68-Cys80, and Cys81-Cys86.

In terms of tissue distribution, expressed by the venom gland.

Its subcellular location is the secreted. Its function is as follows. Binds and inhibits muscular and neuronal nicotinic acetylcholine receptors (nAChR). Is a reversible antagonist of muscle nAChR (alpha-1-beta-1-delta-epsilon/CHRNA1-CHRNB1-CHRND-CHRNE) (IC(50)=10 nM) and a potent and poorly reversible antagonist of the neuronal alpha-7/CHRNA7 nAChR (IC(50)=50 nM). May exhibit differential affinities for the two binding sites on the muscle nAChR. This Bungarus candidus (Malayan krait) protein is Candoxin.